We begin with the raw amino-acid sequence, 452 residues long: UPF0210 protein PTH_0987 (452 aa).

This sequence belongs to the UPF0210 family. In terms of assembly, homodimer.

This Pelotomaculum thermopropionicum (strain DSM 13744 / JCM 10971 / SI) protein is UPF0210 protein PTH_0987.